The chain runs to 143 residues: Transcriptional regulator MraZ (143 aa).

SpoVT-AbrB domains follow at residues Thr5 to Glu47 and Ala76 to Ser119.

The protein belongs to the MraZ family. In terms of assembly, forms oligomers.

The protein localises to the cytoplasm. Its subcellular location is the nucleoid. This is Transcriptional regulator MraZ from Micrococcus luteus (strain ATCC 4698 / DSM 20030 / JCM 1464 / CCM 169 / CCUG 5858 / IAM 1056 / NBRC 3333 / NCIMB 9278 / NCTC 2665 / VKM Ac-2230) (Micrococcus lysodeikticus).